The chain runs to 178 residues: MAAELLEQPVLGSRRLSNILVAAMVTIGGVGFLFASLSSYLGRDLLPLGHPAGLVFVPQGLVMGLYSIAAALLATYLWAVIAIDVGSGSNRFDKQAGVITISRRGFRKPISVEIPLKDVQAVKVEVRDGFNTRRRVSLRVQGRRDMPLTRVGEPLPLAQLEQDGAELARFLGVNLEGL.

2 helical membrane-spanning segments follow: residues 19–39 and 61–81; these read ILVAAMVTIGGVGFLFASLSS and LVMGLYSIAAALLATYLWAVI.

Belongs to the Ycf4 family.

It localises to the cellular thylakoid membrane. Functionally, seems to be required for the assembly of the photosystem I complex. This Synechococcus sp. (strain WH7803) protein is Photosystem I assembly protein Ycf4.